The chain runs to 154 residues: uncharacterized protein (154 aa).

The segment at 91 to 154 (PSEESWGCRQ…WGSPQPSRGA (64 aa)) is disordered. Over residues 134 to 154 (SRDTSPLGGQSWGSPQPSRGA) the composition is skewed to polar residues.

This is an uncharacterized protein from Homo sapiens (Human).